The chain runs to 208 residues: ATP-dependent Clp protease proteolytic subunit (208 aa).

Residue S98 is the Nucleophile of the active site. H123 is a catalytic residue.

The protein belongs to the peptidase S14 family. In terms of assembly, fourteen ClpP subunits assemble into 2 heptameric rings which stack back to back to give a disk-like structure with a central cavity, resembling the structure of eukaryotic proteasomes.

The protein localises to the cytoplasm. The enzyme catalyses Hydrolysis of proteins to small peptides in the presence of ATP and magnesium. alpha-casein is the usual test substrate. In the absence of ATP, only oligopeptides shorter than five residues are hydrolyzed (such as succinyl-Leu-Tyr-|-NHMec, and Leu-Tyr-Leu-|-Tyr-Trp, in which cleavage of the -Tyr-|-Leu- and -Tyr-|-Trp bonds also occurs).. Cleaves peptides in various proteins in a process that requires ATP hydrolysis. Has a chymotrypsin-like activity. Plays a major role in the degradation of misfolded proteins. The chain is ATP-dependent Clp protease proteolytic subunit from Wolbachia sp. subsp. Drosophila simulans (strain wRi).